The chain runs to 213 residues: Large ribosomal subunit protein uL3 (213 aa).

It belongs to the universal ribosomal protein uL3 family. Part of the 50S ribosomal subunit. Forms a cluster with proteins L14 and L19.

One of the primary rRNA binding proteins, it binds directly near the 3'-end of the 23S rRNA, where it nucleates assembly of the 50S subunit. The protein is Large ribosomal subunit protein uL3 of Kosmotoga olearia (strain ATCC BAA-1733 / DSM 21960 / TBF 19.5.1).